The following is a 557-amino-acid chain: Formate--tetrahydrofolate ligase 2 (557 aa).

66-73 (TPAGEGKT) contacts ATP.

This sequence belongs to the formate--tetrahydrofolate ligase family.

The enzyme catalyses (6S)-5,6,7,8-tetrahydrofolate + formate + ATP = (6R)-10-formyltetrahydrofolate + ADP + phosphate. It participates in one-carbon metabolism; tetrahydrofolate interconversion. In Streptococcus pyogenes serotype M12 (strain MGAS9429), this protein is Formate--tetrahydrofolate ligase 2.